Reading from the N-terminus, the 273-residue chain is Glucosamine-6-phosphate deaminase (273 aa).

Asp-72 serves as the catalytic Proton acceptor; for enolization step. The For ring-opening step role is filled by Asp-141. The Proton acceptor; for ring-opening step role is filled by His-143. Residue Glu-148 is the For ring-opening step of the active site.

It belongs to the glucosamine/galactosamine-6-phosphate isomerase family. As to quaternary structure, homohexamer.

It localises to the cytoplasm. The enzyme catalyses alpha-D-glucosamine 6-phosphate + H2O = beta-D-fructose 6-phosphate + NH4(+). It functions in the pathway nucleotide-sugar biosynthesis; UDP-N-acetyl-alpha-D-glucosamine biosynthesis; alpha-D-glucosamine 6-phosphate from D-fructose 6-phosphate: step 1/1. Its function is as follows. Catalyzes the reversible conversion of alpha-D-glucosamine 6-phosphate (GlcN-6P) into beta-D-fructose 6-phosphate (Fru-6P) and ammonium ion, a regulatory reaction step in de novo uridine diphosphate-N-acetyl-alpha-D-glucosamine (UDP-GlcNAc) biosynthesis via hexosamine pathway. This Drosophila melanogaster (Fruit fly) protein is Glucosamine-6-phosphate deaminase.